Reading from the N-terminus, the 74-residue chain is Small ribosomal subunit protein eS28 (74 aa).

The protein belongs to the eukaryotic ribosomal protein eS28 family.

The protein is Small ribosomal subunit protein eS28 of Halorubrum lacusprofundi (strain ATCC 49239 / DSM 5036 / JCM 8891 / ACAM 34).